We begin with the raw amino-acid sequence, 369 residues long: 2-aminoethylphosphonate--pyruvate transaminase (369 aa).

Lys193 is subject to N6-(pyridoxal phosphate)lysine.

The protein belongs to the class-V pyridoxal-phosphate-dependent aminotransferase family. PhnW subfamily. As to quaternary structure, homodimer. The cofactor is pyridoxal 5'-phosphate.

The enzyme catalyses (2-aminoethyl)phosphonate + pyruvate = phosphonoacetaldehyde + L-alanine. Involved in phosphonate degradation. The polypeptide is 2-aminoethylphosphonate--pyruvate transaminase (Burkholderia mallei (strain NCTC 10247)).